The following is a 936-amino-acid chain: Phosphoenolpyruvate carboxylase (936 aa).

Residues His155 and Lys595 contribute to the active site.

The protein belongs to the PEPCase type 1 family. In terms of assembly, homotetramer. Requires Mg(2+) as cofactor. Mn(2+) serves as cofactor.

The catalysed reaction is oxaloacetate + phosphate = phosphoenolpyruvate + hydrogencarbonate. Its activity is regulated as follows. Exhibits positive allosteric property with acetyl-CoA and fructose 1,6-bisphosphate, and a negative one with L-aspartate and L-malate. Functionally, forms oxaloacetate, a four-carbon dicarboxylic acid source for the tricarboxylic acid cycle. The chain is Phosphoenolpyruvate carboxylase (ppc) from Rhodothermus marinus (Rhodothermus obamensis).